The primary structure comprises 516 residues: Squalene epoxidase 4 (516 aa).

2 helical membrane passes run 2-22 and 43-63; these read TYAW…FHLI and ATDV…YALA. FAD contacts are provided by residues 53–54, 73–74, R81, R153, V169, D335, and M348; these read VA and ER. A helical membrane pass occupies residues 435-455; that stretch reads ILGGMNPHPLTLVLHLVAITL.

It belongs to the squalene monooxygenase family. Requires FAD as cofactor. As to expression, expressed mainly in seedlings and inflorescences.

The protein localises to the membrane. The catalysed reaction is squalene + reduced [NADPH--hemoprotein reductase] + O2 = (S)-2,3-epoxysqualene + oxidized [NADPH--hemoprotein reductase] + H2O + H(+). Its pathway is terpene metabolism; lanosterol biosynthesis; lanosterol from farnesyl diphosphate: step 2/3. In terms of biological role, catalyzes the stereospecific oxidation of squalene to (S)-2,3-epoxysqualene, and is considered to be a rate-limiting enzyme in steroid biosynthesis. The sequence is that of Squalene epoxidase 4 (SQE4) from Arabidopsis thaliana (Mouse-ear cress).